The following is a 345-amino-acid chain: Nuclear distribution protein nudE-like 1-A (345 aa).

Positions 19–190 (WRELSKRLKQ…LAVRERQTDG (172 aa)) form a coiled coil. Basic and acidic residues predominate over residues 182 to 192 (AVRERQTDGTR). 2 disordered regions span residues 182-206 (AVRERQTDGTRKSAPSSPTLDCDKT) and 326-345 (PPGVLGSRPPSPPGMLPLSV). The span at 334–345 (PPSPPGMLPLSV) shows a compositional bias: pro residues.

It belongs to the nudE family. Phosphorylated in mitosis.

Its subcellular location is the cytoplasm. The protein resides in the cytoskeleton. The protein localises to the microtubule organizing center. It is found in the centrosome. It localises to the spindle. Functionally, required for organization of the cellular microtubule array and microtubule anchoring at the centrosome. Positively regulates the activity of the minus-end directed microtubule motor protein dynein. May enhance dynein-mediated microtubule sliding by targeting dynein to the microtubule plus end. Positively regulates lysosome peripheral distribution and ruffled border formation in osteoclasts. This Xenopus laevis (African clawed frog) protein is Nuclear distribution protein nudE-like 1-A (ndel1-a).